A 376-amino-acid polypeptide reads, in one-letter code: Protein XRP2 (376 aa).

The segment at 1–55 is disordered; sequence MGCFFSKKSRRKSPKKDAALPTGDESATGNDLAETNNTALGSNSNQEAPKQYSWD. Gly-2 is lipidated: N-myristoyl glycine. Cys-3 is lipidated: S-palmitoyl cysteine. Over residues 25–48 the composition is skewed to polar residues; sequence ESATGNDLAETNNTALGSNSNQEA. The region spanning 49-204 is the C-CAP/cofactor C-like domain; the sequence is PKQYSWDKRE…NWSNIHDFTP (156 aa). GTP contacts are provided by residues 123–124 and 140–143; these read GS and QQFR.

The protein belongs to the TBCC family. Myristoylated on Gly-2; which may be required for membrane targeting. Post-translationally, palmitoylated on Cys-3; which may be required for plasma membrane targeting. In terms of tissue distribution, in the retina, detected in both rod and cone photoreceptors (at protein level). Has strongest expression in the retinal outer nuclear layer (ONL) and weaker expression in the outer plexiform layer (OPL) and inner plexiform layer (IPL) (at protein level). Expressed in all tissues tested.

It is found in the cell membrane. It localises to the cell projection. The protein resides in the cilium. In terms of biological role, acts as a GTPase-activating protein (GAP) involved in trafficking between the Golgi and the ciliary membrane. Acts as a GTPase-activating protein (GAP) for tubulin in concert with tubulin-specific chaperone C, but does not enhance tubulin heterodimerization. In the retina, required for maintenance of rod and cone photoreceptor cells. May have a role in normal retinal localization of the transducins GNB1 and GNAT1, and the rhodopsin kinase GRK1. This chain is Protein XRP2, found in Danio rerio (Zebrafish).